The sequence spans 889 residues: MAADVVGDVYVLVEHPFEYTGKDGRRVAIRPNERYRLLRRSTEHWWHVRREPGGRPFYLPAQYVRELPALGNPAAAAPPGPHPSPAAPEPLAYDYRFVSAAATAGPDGAPEESGGRASSLCGPAQRGAATQRSSLAPGLPACLYLRPAAPVRPAQSLNDLACAAVSPPAGLLGSSGSFKACSVAGSWVCPRPLARSDSENVYEVIQDLHVPPPEESAEQVDDPPEPVYANIERQPRATSPGAAAAPLPSPVWETHTDAGTGRPYYYNPDTGVTTWESPFEAAEGAASPATSPASVDSHVSLETEWGQYWDEESRRVFFYNPLTGETAWEDEAENEPEEELEMQPGLSPGSPGDPRPPTPETDYPESLTSYPEEDYSPVGSFGEPGPTSPLTTPPGWSCHVSQDKQMLYTNHFTQEQWVRLEDPHGKPYFYNPEDSSVRWELPQVPVPAPRSIHKSSQDGDTPAQASPPEEKVPAELDEVGSWEEVSPATAAVRTKTLDKAGVLHRTKTADKGKRLRKKHWSASWTVLEGGVLTFFKDSKTSAAGGLRQPSKFSTPEYTVELRGATLSWAPKDKSSRKNVLELRSRDGSEYLIQHDSEAIISTWHKAIAQGIQELSAELPPEESESSRVDFGSSERLGSWQEKEEDARPNAAAPALGPVGLESDLSKVRHKLRKFLQRRPTLQSLREKGYIKDQVFGCALAALCERERSRVPRFVQQCIRAVEARGLDIDGLYRISGNLATIQKLRYKVDHDERLDLDDGRWEDVHVITGALKLFFRELPEPLFPFSHFRQFIAAIKLQDQARRSRCVRDLVRSLPAPNHDTLRMLFQHLCRVIEHGEQNRMSVQSVAIVFGPTLLRPEVEETSMPMTMVFQNQVVELILQQCADIFPPH.

In terms of domain architecture, SH3 spans 6–69 (VGDVYVLVEH…PAQYVRELPA (64 aa)). Residues 104-132 (AGPDGAPEESGGRASSLCGPAQRGAATQR) are disordered. Residues S156, S216, and S249 each carry the phosphoserine modification. 2 consecutive WW domains span residues 246–280 (PLPS…SPFE) and 299–333 (VSLE…DEAE). Residues 329 to 341 (EDEAENEPEEELE) are compositionally biased toward acidic residues. Residues 329-397 (EDEAENEPEE…SPLTTPPGWS (69 aa)) are disordered. At S347 the chain carries Phosphoserine. A compositionally biased stretch (low complexity) spans 383–395 (EPGPTSPLTTPPG). Residues 411-444 (HFTQEQWVRLEDPHGKPYFYNPEDSSVRWELPQV) enclose the WW 3 domain. Positions 447-474 (PAPRSIHKSSQDGDTPAQASPPEEKVPA) are disordered. Position 456 is a phosphoserine (S456). Residue T461 is modified to Phosphothreonine. S466 is subject to Phosphoserine. One can recognise a PH domain in the interval 496-612 (TLDKAGVLHR…WHKAIAQGIQ (117 aa)). Residues 617–655 (ELPPEESESSRVDFGSSERLGSWQEKEEDARPNAAAPAL) are disordered. One can recognise a Rho-GAP domain in the interval 697–886 (CALAALCERE…LILQQCADIF (190 aa)).

Interacts with SH3KBP1/CIN85. In terms of tissue distribution, expressed in germinal center B-cell, spleen, chronic lymphocytic leukemia, pancreatic cancer and lung cancer.

The protein localises to the cytoplasm. It is found in the membrane. Its function is as follows. Rho GTPase-activating protein which may be involved in clathrin-mediated endocytosis. GTPase activators for the Rho-type GTPases act by converting them to an inactive GDP-bound state. Has activity toward CDC42 and RAC1. The polypeptide is Rho GTPase-activating protein 27 (Homo sapiens (Human)).